The chain runs to 29 residues: MDIISLGWSSLLVVFTFSLSLVVWGRNGF.

Residues 3-23 (IISLGWSSLLVVFTFSLSLVV) form a helical membrane-spanning segment.

Belongs to the PetN family. As to quaternary structure, the 4 large subunits of the cytochrome b6-f complex are cytochrome b6, subunit IV (17 kDa polypeptide, PetD), cytochrome f and the Rieske protein, while the 4 small subunits are PetG, PetL, PetM and PetN. The complex functions as a dimer.

It localises to the plastid. Its subcellular location is the chloroplast thylakoid membrane. Functionally, component of the cytochrome b6-f complex, which mediates electron transfer between photosystem II (PSII) and photosystem I (PSI), cyclic electron flow around PSI, and state transitions. This is Cytochrome b6-f complex subunit 8 from Rhodomonas salina (Cryptomonas salina).